The following is a 209-amino-acid chain: Uracil phosphoribosyltransferase (209 aa).

5-phospho-alpha-D-ribose 1-diphosphate is bound by residues Arg79, Arg104, and 131–139 (DPMLATGGS). Uracil is bound by residues Ile194 and 199-201 (GDA). Position 200 (Asp200) interacts with 5-phospho-alpha-D-ribose 1-diphosphate.

This sequence belongs to the UPRTase family. Requires Mg(2+) as cofactor.

The enzyme catalyses UMP + diphosphate = 5-phospho-alpha-D-ribose 1-diphosphate + uracil. Its pathway is pyrimidine metabolism; UMP biosynthesis via salvage pathway; UMP from uracil: step 1/1. With respect to regulation, allosterically activated by GTP. In terms of biological role, catalyzes the conversion of uracil and 5-phospho-alpha-D-ribose 1-diphosphate (PRPP) to UMP and diphosphate. The polypeptide is Uracil phosphoribosyltransferase (Geobacillus kaustophilus (strain HTA426)).